The following is a 456-amino-acid chain: Glutamate-gated chloride channel (456 aa).

Positions 1–22 are cleaved as a signal peptide; the sequence is MGSGHYFWAILYFASLCSASLA. Residues 23 to 245 lie on the Extracellular side of the membrane; the sequence is NNAKINFREK…VDLLFKREFS (223 aa). Positions 71, 90, and 154 each coordinate L-glutamate. Cys-163 and Cys-177 are joined by a disulfide. Ser-183 contacts L-glutamate. Cys-222 and Cys-233 are oxidised to a cystine. Residues 246–268 traverse the membrane as a helical segment; it reads YYLIQIYIPCCMLVIVSWVSFWL. Residues 269 to 273 lie on the Cytoplasmic side of the membrane; the sequence is DQGAV. The chain crosses the membrane as a helical span at residues 274-295; the sequence is PARVSLGVTTLLTMATQTSGIN. At 296 to 302 the chain is on the extracellular side; that stretch reads ASLPPVS. The chain crosses the membrane as a helical span at residues 303-323; it reads YTKAIDVWTGVCLTFVFGALL. At 324–426 the chain is on the cytoplasmic side; that stretch reads EFALVNYASR…RQCSRSKRID (103 aa). The chain crosses the membrane as a helical span at residues 427–450; that stretch reads VISRITFPLVFALFNLVYWSTYLF. The Extracellular portion of the chain corresponds to 451 to 456; it reads REEEDE.

It belongs to the ligand-gated ion channel (TC 1.A.9) family. Glutamate-gated chloride channel (TC 1.A.9.4) subfamily. As to quaternary structure, pentamer. Homomultimer. In terms of tissue distribution, expressed in the medulla layers (at protein level). Expressed in all major ON pathway medulla neurons (Mi1, Tm3, Mi4, and Mi9) and in OFF pathway neurons (Tm1, Tm2, Tm4, and Tm9).

It is found in the postsynaptic cell membrane. Its subcellular location is the cell membrane. With respect to regulation, glutamate binding triggers a rapidly reversible current, while the anti-helmintic drug ivermectin triggers a permanently open channel configuration. Inhibited by picrotoxin. In terms of biological role, glutamate-gated chloride channel subunit. Together with Gamma-aminobutyric acid receptor Rdl, plays an important role in the visual response by regulating the activity of ON/OFF-selective neurons. The polypeptide is Glutamate-gated chloride channel (GluClalpha) (Drosophila melanogaster (Fruit fly)).